A 1136-amino-acid chain; its full sequence is Pesticidal crystal protein Cry4B protoxin (1136 aa).

Residues 84–282 are domain I; sequence TPERVWNDFM…PADKIDNTKL (199 aa). The segment at 283-466 is domain II; sequence SKTEFTREIY…SNRVSFAWTH (184 aa). The segment at 467 to 641 is domain III; that stretch reads KIVDPNNQIY…PITQSVLDET (175 aa).

Belongs to the delta endotoxin family. As to quaternary structure, in the presence of micelles active toxin forms oligomers that can be fit into cryo-EM maps as trimers. Binds to host (A.gambiae) cadherin AgCad1 (also called BT-R3), probably on the cell surface. Activated toxin may bind its host AgCad1 receptor as a monomer, but also forms an oligomer that is not active. Mg(2+) serves as cofactor. Post-translationally, treatment of recombinant protein with A.aegypti 3rd instar larvae midgut extract for 1 hour yields major bands of 72 and 45 kDa, the combined proteins are toxic to mosquitoes. Longer digestion, which removes the 72 kDa protein, yields a non-toxic preparation. Proteolysis by yields a 65 kDa toxic protein and 48 and 17 kDa fragments which are not toxic. Host (A.gambiae) larval midgut; binds to host brush border membranes, probably to cadherin-AgCad1 (Cad1, also called BT-R3).

Its subcellular location is the spore. Toxic activity on Trichoplusia ni insect cells stably transfected with the AgCad1/BT-R3 receptor leads to oncosis, cell death characterized by cell swelling, membrane blebbing and depletion of energy reserves. Cell death is blocked by EDTA (but not EGTA) and is partially prevented by pretreatment with NF449 (inhibits G-s-alpha-60A and adenylyl cyclase, AC) and 2',5'-dideoxyadenosine 3'-diphosphate (ddADP, inhibits AC), while H-89 and PKAI 14-22 (both inhibit protein kinase A), ouabain (inhibits Na+/K+-ATPase) and a cell exocytosis inhibitor (Exo1) nearly completely prevent the action of the toxin in this system. The cAMP analog pCPT-cAMP and the AC activator FSK enhance toxicity. A pesticidal protein active against Aedes and Anopheles mosquito species; activity on Culex species is strain dependent. It remains toxic to permethrin-resistant strains of A.gambiae. Following activation of the protoxin by mosquito larvae midgut extract (or by chymotrypsin or trypsin treatment) it becomes insecticidal. Causes mosquito cell death by activating a host G-protein-coupled receptor which subsequently activates adenylyl cyclase and increases cAMP production. cAMP activates protein kinase A which sets off a series of downstream events which includes increased exocytosis (probably bringing more receptor to the cell membrane), Na+/K+-ATPase activation and eventual host cell death. Another group suggests that alkaline phosphatase serves as the insect receptor and that the protein forms pores in insect cell membranes. This Bacillus thuringiensis subsp. israelensis protein is Pesticidal crystal protein Cry4B protoxin.